Reading from the N-terminus, the 280-residue chain is F-box only protein 27 (280 aa).

The tract at residues 1-26 (MGAWASRGRAARVPAPEPESEPEEAL) is disordered. Positions 25–72 (ALDLSQLPPELLLVVLSHVPPRTLLGRCRQVCRGWRALVDGQALWLLI) constitute an F-box domain. The 178-residue stretch at 100 to 277 (PCPLGRFCAR…VTNSSVIVRV (178 aa)) folds into the FBA domain.

In terms of assembly, part of a SCF (SKP1-cullin-F-box) protein ligase complex. Interacts with SKP1 and CUL1.

Substrate-recognition component of the SCF (SKP1-CUL1-F-box protein)-type E3 ubiquitin ligase complex. Able to recognize and bind complex-type oligosaccharides. In Macaca fascicularis (Crab-eating macaque), this protein is F-box only protein 27 (FBXO27).